The sequence spans 660 residues: UvrABC system protein C (660 aa).

The GIY-YIG domain occupies 16 to 95 (ESPGVYRFRD…IKQYDPRFNV (80 aa)). The UVR domain occupies 208–243 (DAMVRRLEREMAEASAELEFERAARLRDDLAALRRA). The tract at residues 469–501 (GEAGVESAGDPDAPAGPDAPDEPRVGTLVDPTT) is disordered. Residues 476–486 (AGDPDAPAGPD) show a composition bias toward low complexity.

The protein belongs to the UvrC family. As to quaternary structure, interacts with UvrB in an incision complex.

The protein resides in the cytoplasm. Its function is as follows. The UvrABC repair system catalyzes the recognition and processing of DNA lesions. UvrC both incises the 5' and 3' sides of the lesion. The N-terminal half is responsible for the 3' incision and the C-terminal half is responsible for the 5' incision. The sequence is that of UvrABC system protein C from Salinispora arenicola (strain CNS-205).